The chain runs to 75 residues: UPF0352 protein CKO_00587 (75 aa).

The protein belongs to the UPF0352 family.

The sequence is that of UPF0352 protein CKO_00587 from Citrobacter koseri (strain ATCC BAA-895 / CDC 4225-83 / SGSC4696).